The following is a 429-amino-acid chain: UDP-N-acetylglucosamine 1-carboxyvinyltransferase (429 aa).

Residue 22–23 (KN) participates in phosphoenolpyruvate binding. Residue arginine 102 coordinates UDP-N-acetyl-alpha-D-glucosamine. Cysteine 126 (proton donor) is an active-site residue. Position 126 is a 2-(S-cysteinyl)pyruvic acid O-phosphothioketal (cysteine 126). 2 residues coordinate UDP-N-acetyl-alpha-D-glucosamine: aspartate 316 and isoleucine 338.

It belongs to the EPSP synthase family. MurA subfamily.

The protein localises to the cytoplasm. The catalysed reaction is phosphoenolpyruvate + UDP-N-acetyl-alpha-D-glucosamine = UDP-N-acetyl-3-O-(1-carboxyvinyl)-alpha-D-glucosamine + phosphate. It participates in cell wall biogenesis; peptidoglycan biosynthesis. Cell wall formation. Adds enolpyruvyl to UDP-N-acetylglucosamine. This Methylorubrum extorquens (strain PA1) (Methylobacterium extorquens) protein is UDP-N-acetylglucosamine 1-carboxyvinyltransferase.